The chain runs to 928 residues: Zinc metalloproteinase nas-39 (928 aa).

An N-terminal signal peptide occupies residues 1 to 30 (MRFSANIAIIVNIIFLFIVVEFVLPTFIRS). In terms of domain architecture, Peptidase M12A spans 48–247 (AATAKKERIW…RQTKKLYKCA (200 aa)). N-linked (GlcNAc...) asparagine glycosylation is found at Asn-69 and Asn-87. Cystine bridges form between Cys-90/Cys-246, Cys-111/Cys-133, Cys-113/Cys-114, and Cys-249/Cys-268. Residue His-141 coordinates Zn(2+). Residue Glu-142 is part of the active site. Zn(2+) contacts are provided by His-145 and His-151. 2 CUB domains span residues 249 to 359 (CGGT…YAIC) and 360 to 476 (GGPI…FTKE). The N-linked (GlcNAc...) asparagine glycan is linked to Asn-283. Disulfide bonds link Cys-359-Cys-385, Cys-412-Cys-439, Cys-480-Cys-491, Cys-487-Cys-500, Cys-502-Cys-515, and Cys-519-Cys-545. The EGF-like 1; calcium-binding domain maps to 477-516 (LNECATDKNICHHYCVNTVGGFKCACRVGYSLSSNGFSCD). In terms of domain architecture, CUB 3 spans 519–625 (CGGYLKASNG…DGFFANFIAD (107 aa)). Asn-527 and Asn-560 each carry an N-linked (GlcNAc...) asparagine glycan. Intrachain disulfides connect Cys-573–Cys-587, Cys-629–Cys-640, Cys-636–Cys-649, Cys-651–Cys-664, Cys-669–Cys-695, Cys-722–Cys-744, Cys-782–Cys-812, and Cys-840–Cys-863. The EGF-like 2; calcium-binding domain maps to 626 to 665 (FDECQNDNAGCEHTCQNRLGSYVCTCNPGYILAEDKHNCK). 2 CUB domains span residues 669 to 781 (CFFE…YTSL) and 782 to 900 (CGGR…YREA). Asn-694 is a glycosylation site (N-linked (GlcNAc...) asparagine). Positions 895–928 (AEYREAPRSSSTKRTFVSKTRHSPLEEPIHDRNE) are disordered. Over residues 902–912 (RSSSTKRTFVS) the composition is skewed to polar residues. Over residues 917-928 (SPLEEPIHDRNE) the composition is skewed to basic and acidic residues.

It depends on Zn(2+) as a cofactor. As to expression, expressed in pharyngeal, vulva and body wall muscles, intestine and several neurons.

It is found in the secreted. Functionally, metalloprotease. The chain is Zinc metalloproteinase nas-39 from Caenorhabditis elegans.